The following is a 265-amino-acid chain: MIKWPWKAQEITQNEDWPWDDALAIPLLVNLTAQEQARLIALAERFLQQKRLVALQGFELDSLKSARIALIFCLPILELGIEWLDGFHEVLIYPAPFVVDDEWEDDIGLVHSQRVVQSGQSWQQGPIILNWLDILDSFDASGFNLIIHEVAHKLDMRNGDRASGIPFIPLRDVAGWEHDLHAAMNNIQDEIDLVGESAASIDAYAATDPAECFAVLSEYFFSAPELFAPRFPALWQRFCQFYRQDPSQRLRVSAAEGDYGEESEH.

Zn(2+) is bound by residues His-111, His-148, His-152, and Glu-211.

This sequence belongs to the MtfA family. Interacts with Mlc. It depends on Zn(2+) as a cofactor.

It localises to the cytoplasm. In terms of biological role, involved in the modulation of the activity of the glucose-phosphotransferase system (glucose-PTS). Interacts with the transcriptional repressor Mlc, preventing its interaction with DNA and leading to the modulation of expression of genes regulated by Mlc, including ptsG, which encodes the PTS system glucose-specific EIICB component. Functionally, shows zinc-dependent metallopeptidase activity. The chain is Mlc titration factor A from Salmonella agona (strain SL483).